Here is a 248-residue protein sequence, read N- to C-terminus: ATP synthase subunit a (248 aa).

Helical transmembrane passes span 31–51 (GQVL…VILG), 90–110 (VPYV…GNLF), 129–149 (INTT…AGIS), 195–215 (VIAV…MVLF), and 216–236 (LFTG…YIGE).

This sequence belongs to the ATPase A chain family. As to quaternary structure, F-type ATPases have 2 components, CF(1) - the catalytic core - and CF(0) - the membrane proton channel. CF(1) has five subunits: alpha(3), beta(3), gamma(1), delta(1), epsilon(1). CF(0) has four main subunits: a, b, b' and c.

The protein resides in the cellular thylakoid membrane. Functionally, key component of the proton channel; it plays a direct role in the translocation of protons across the membrane. The protein is ATP synthase subunit a of Synechococcus sp. (strain JA-2-3B'a(2-13)) (Cyanobacteria bacterium Yellowstone B-Prime).